Consider the following 330-residue polypeptide: PDZ and LIM domain protein 4 (330 aa).

The PDZ domain maps to 1–84; sequence MPHSVTLRGP…HLTLSVSRPE (84 aa). The disordered stretch occupies residues 104–180; sequence IDPEIQDGSP…DPARGLPRSR (77 aa). Residues 111 to 121 show a composition bias toward low complexity; the sequence is GSPTTSRRPSG. Phosphoserine is present on residues Ser112, Ser116, Ser120, and Ser135. The segment covering 148-163 has biased composition (polar residues); that stretch reads NGSSEATLPAQMSTLH. The LIM zinc-binding domain maps to 253–312; it reads PECTRCGHGIVGTIVKARDKLYHPECFMCSDCGLNLKQRGYFFLDERLYCESHAKARVKP.

As to quaternary structure, homodimer. Interacts with PTPN13. Interacts (via C-terminus only or via combined C-terminus and LIM domain, but not LIM domain only) with PTPN13 (via the second or fourth PDZ domains). Found in a complex with PTPN13 and TRIP6. Interacts (via PDZ domain) with ACTN1 and ACTN2 (via C-terminal SDL residues). Interacts (via PDZ domain) with TRIP6 (via the second LIM domain or via the third LIM domain plus C-terminus). Interacts (via LIM domain) with GRIA1 (via C-terminus); this interaction as well as the interaction with alpha-actinin is required for their colocalization in early endosomes. Interacts with PDLIM1. Forms (via LIM domain) a heterodimer with PDLIM3. Interacts directly with SRC (via kinase domain and to a lesser extent the SH2 domain). Isoform 2 interacts with NQO1. NQO1-stabilized isoform 2 heterodimerizes with isoform 1. Post-translationally, phosphorylated on tyrosine residue(s). Can be dephosphorylated by PTPN13. As to expression, found in brain.

It localises to the cytoplasm. The protein resides in the cytoskeleton. The protein localises to the nucleus. It is found in the perinuclear region. Its subcellular location is the cell projection. It localises to the lamellipodium. The protein resides in the dendritic spine. The protein localises to the early endosome membrane. It is found in the recycling endosome membrane. Its subcellular location is the synapse. It localises to the synaptosome. Its function is as follows. Suppresses SRC activation by recognizing and binding to active SRC and facilitating PTPN13-mediated dephosphorylation of SRC 'Tyr-419' leading to its inactivation. Inactivated SRC dissociates from this protein allowing the initiation of a new SRC inactivation cycle. Involved in reorganization of the actin cytoskeleton. In nonmuscle cells, binds to ACTN1 (alpha-actinin-1), increases the affinity of ACTN1 to F-actin (filamentous actin), and promotes formation of actin stress fibers. Involved in regulation of the synaptic AMPA receptor transport in dendritic spines of hippocampal pyramidal neurons directing the receptors toward an insertion at the postsynaptic membrane. Links endosomal surface-internalized GRIA1-containing AMPA receptors to the alpha-actinin/actin cytoskeleton. Increases AMPA receptor-mediated excitatory postsynaptic currents in neurons. In terms of biological role, involved in reorganization of the actin cytoskeleton and in regulation of cell migration. In response to oxidative stress, binds to NQO1, which stabilizes it and protects it from ubiquitin-independent degradation by the core 20S proteasome. Stabilized protein is able to heterodimerize with isoform 1 changing the subcellular location of it from cytoskeleton and nuclei to cytosol, leading to loss of isoforms 1 ability to induce formation of actin stress fibers. Counteracts the effects produced by isoform 1 on organization of actin cytoskeleton and cell motility to fine-tune actin cytoskeleton rearrangement and to attenuate cell migration. In Homo sapiens (Human), this protein is PDZ and LIM domain protein 4 (PDLIM4).